The chain runs to 259 residues: Dihydroorotate dehydrogenase B (NAD(+)), electron transfer subunit (259 aa).

One can recognise an FAD-binding FR-type domain in the interval 2–102 (MQKQNMIVVN…LGPLGHGFPV (101 aa)). FAD is bound by residues 53–56 (RPIS), 70–72 (LYR), and 77–78 (GT). [2Fe-2S] cluster is bound by residues Cys-221, Cys-226, Cys-229, and Cys-246.

This sequence belongs to the PyrK family. Heterotetramer of 2 PyrK and 2 PyrD type B subunits. Requires [2Fe-2S] cluster as cofactor. It depends on FAD as a cofactor.

Its pathway is pyrimidine metabolism; UMP biosynthesis via de novo pathway; orotate from (S)-dihydroorotate (NAD(+) route): step 1/1. In terms of biological role, responsible for channeling the electrons from the oxidation of dihydroorotate from the FMN redox center in the PyrD type B subunit to the ultimate electron acceptor NAD(+). The polypeptide is Dihydroorotate dehydrogenase B (NAD(+)), electron transfer subunit (Bacillus cereus (strain G9842)).